The chain runs to 65 residues: Translational regulator CsrA (65 aa).

Belongs to the CsrA/RsmA family. In terms of assembly, homodimer; the beta-strands of each monomer intercalate to form a hydrophobic core, while the alpha-helices form wings that extend away from the core.

Its subcellular location is the cytoplasm. In terms of biological role, a key translational regulator that binds mRNA to regulate translation initiation and/or mRNA stability. Mediates global changes in gene expression, shifting from rapid growth to stress survival by linking envelope stress, the stringent response and the catabolite repression systems. Usually binds in the 5'-UTR; binding at or near the Shine-Dalgarno sequence prevents ribosome-binding, repressing translation, binding elsewhere in the 5'-UTR can activate translation and/or stabilize the mRNA. Its function is antagonized by small RNA(s). The chain is Translational regulator CsrA from Pseudomonas putida (strain ATCC 47054 / DSM 6125 / CFBP 8728 / NCIMB 11950 / KT2440).